The primary structure comprises 95 residues: Glutamine synthetase and cystathionine beta-lyase binding protein (95 aa).

Interacts with glutamine synthetase (TTHA1329) and cystathionine beta-lyase (TTHA1620), but proteins do not form a ternary complex.

Binds to glutamine synthetase and cystathionine beta-lyase. May be utilized for the efficient use of nitrogen in the global nitrogen regulation of T.thermophilus. The sequence is that of Glutamine synthetase and cystathionine beta-lyase binding protein from Thermus thermophilus (strain ATCC 27634 / DSM 579 / HB8).